The chain runs to 347 residues: NADH-ubiquinone oxidoreductase chain 2 (347 aa).

The next 11 helical transmembrane spans lie at 1 to 21, 25 to 45, 59 to 79, 96 to 116, 123 to 143, 153 to 173, 178 to 198, 200 to 220, 239 to 259, 278 to 298, and 325 to 345; these read MNPL…IITM, HWLT…PLIM, YFLI…INFM, TIIL…FWVP, LLST…SILY, IILA…LNQT, IMAY…IYNP, LMLL…TILI, ILMM…PLSG, ISLT…RLIY, and FLPT…MMFI.

The protein belongs to the complex I subunit 2 family. As to quaternary structure, core subunit of respiratory chain NADH dehydrogenase (Complex I) which is composed of 45 different subunits. Interacts with TMEM242.

It is found in the mitochondrion inner membrane. It catalyses the reaction a ubiquinone + NADH + 5 H(+)(in) = a ubiquinol + NAD(+) + 4 H(+)(out). In terms of biological role, core subunit of the mitochondrial membrane respiratory chain NADH dehydrogenase (Complex I) that is believed to belong to the minimal assembly required for catalysis. Complex I functions in the transfer of electrons from NADH to the respiratory chain. The immediate electron acceptor for the enzyme is believed to be ubiquinone. The protein is NADH-ubiquinone oxidoreductase chain 2 of Oryzorictes hova (Hova rice tenrec).